The sequence spans 473 residues: Ribulose bisphosphate carboxylase large chain (473 aa).

A propeptide spanning residues 1 to 2 (MS) is cleaved from the precursor. Pro3 carries the N-acetylproline modification. The residue at position 14 (Lys14) is an N6,N6,N6-trimethyllysine. Substrate is bound by residues Asn123 and Thr173. The active-site Proton acceptor is Lys175. Position 177 (Lys177) interacts with substrate. Residues Lys201, Asp203, and Glu204 each coordinate Mg(2+). N6-carboxylysine is present on Lys201. Residue His294 is the Proton acceptor of the active site. The substrate site is built by Arg295, His327, and Ser379.

It belongs to the RuBisCO large chain family. Type I subfamily. In terms of assembly, heterohexadecamer of 8 large chains and 8 small chains; disulfide-linked. The disulfide link is formed within the large subunit homodimers. Requires Mg(2+) as cofactor. In terms of processing, the disulfide bond which can form in the large chain dimeric partners within the hexadecamer appears to be associated with oxidative stress and protein turnover.

It is found in the plastid. The protein localises to the chloroplast. It carries out the reaction 2 (2R)-3-phosphoglycerate + 2 H(+) = D-ribulose 1,5-bisphosphate + CO2 + H2O. It catalyses the reaction D-ribulose 1,5-bisphosphate + O2 = 2-phosphoglycolate + (2R)-3-phosphoglycerate + 2 H(+). In terms of biological role, ruBisCO catalyzes two reactions: the carboxylation of D-ribulose 1,5-bisphosphate, the primary event in carbon dioxide fixation, as well as the oxidative fragmentation of the pentose substrate in the photorespiration process. Both reactions occur simultaneously and in competition at the same active site. The chain is Ribulose bisphosphate carboxylase large chain from Cajanus cajan (Pigeon pea).